The sequence spans 415 residues: Gamma-glutamyl phosphate reductase (415 aa).

The protein belongs to the gamma-glutamyl phosphate reductase family.

Its subcellular location is the cytoplasm. The enzyme catalyses L-glutamate 5-semialdehyde + phosphate + NADP(+) = L-glutamyl 5-phosphate + NADPH + H(+). The protein operates within amino-acid biosynthesis; L-proline biosynthesis; L-glutamate 5-semialdehyde from L-glutamate: step 2/2. Catalyzes the NADPH-dependent reduction of L-glutamate 5-phosphate into L-glutamate 5-semialdehyde and phosphate. The product spontaneously undergoes cyclization to form 1-pyrroline-5-carboxylate. The sequence is that of Gamma-glutamyl phosphate reductase from Desulforamulus reducens (strain ATCC BAA-1160 / DSM 100696 / MI-1) (Desulfotomaculum reducens).